The primary structure comprises 331 residues: Homoarginine-6-hydroxylase 2-ODD-C23 (331 aa).

Residues 182 to 289 (PFWVMRLIGY…RVSVVYFYET (108 aa)) form the Fe2OG dioxygenase domain. Fe cation contacts are provided by histidine 212, aspartate 214, and histidine 270. A 2-oxoglutarate-binding site is contributed by arginine 280.

The protein belongs to the iron/ascorbate-dependent oxidoreductase family. Fe(2+) is required as a cofactor.

The protein resides in the cytoplasm. It is found in the cytosol. The catalysed reaction is L-homoarginine + 2-oxoglutarate + O2 = 6-hydroxy-L-homoarginine + succinate + CO2. In terms of biological role, 2-oxoglutarate-dependent dioxygenase catalyzing homoarginine 6-hydroxylation thus producing 6-hydroxy-L-homoarginine. Guanidine (Gd) is in turn synthesized by the spontaneous conversion of 6-hydroxy-L-homoarginine to (S)-2-amino-6-oxohexanoate (RHEA:79843); guanidine is a nitrogen-rich compound that can serve as a defense or signaling substance. This Glycine max (Soybean) protein is Homoarginine-6-hydroxylase 2-ODD-C23.